The primary structure comprises 171 residues: NADP-reducing hydrogenase subunit HndA (171 aa).

[2Fe-2S] cluster contacts are provided by C98, C103, C139, and C143.

It belongs to the complex I 24 kDa subunit family. In terms of assembly, heterotetramer composed of HndA, HndB, HndC and HndD subunits. HndA and HndB could form a heterodimeric intermediate in the electron transfer between the active site of hydrogenase subunit HndD and the NADP reduction site of the reducing subunit HndC. The cofactor is [2Fe-2S] cluster.

The catalysed reaction is H2 + NADP(+) = NADPH + H(+). Inhibited by oxygen. Its function is as follows. Catalyzes the reduction of NADP in the presence of molecular H(2) to yield NADPH. The sequence is that of NADP-reducing hydrogenase subunit HndA (hndA) from Solidesulfovibrio fructosivorans (Desulfovibrio fructosivorans).